The primary structure comprises 193 residues: Fe/S biogenesis protein NfuA (193 aa).

Residues C149 and C152 each contribute to the [4Fe-4S] cluster site.

The protein belongs to the NfuA family. Homodimer. Requires [4Fe-4S] cluster as cofactor.

Its function is as follows. Involved in iron-sulfur cluster biogenesis. Binds a 4Fe-4S cluster, can transfer this cluster to apoproteins, and thereby intervenes in the maturation of Fe/S proteins. Could also act as a scaffold/chaperone for damaged Fe/S proteins. The chain is Fe/S biogenesis protein NfuA from Psychromonas ingrahamii (strain DSM 17664 / CCUG 51855 / 37).